A 324-amino-acid chain; its full sequence is Annexin A3 (324 aa).

Annexin repeat units follow at residues 19–90 (FNPS…ALIT), 91–162 (APAV…TLAD), 174–246 (HLAK…AVVR), and 250–321 (NTPA…KICG). An N6-acetyllysine modification is found at Lys178. Thr268 is subject to Phosphothreonine.

The protein belongs to the annexin family.

Its function is as follows. Inhibitor of phospholipase A2, also possesses anti-coagulant properties. This is Annexin A3 (Anxa3) from Rattus norvegicus (Rat).